A 139-amino-acid polypeptide reads, in one-letter code: Nucleoside diphosphate kinase (139 aa).

Residues Lys-11, Phe-59, Arg-87, Thr-93, Arg-104, and Asn-114 each coordinate ATP. The active-site Pros-phosphohistidine intermediate is the His-117.

Belongs to the NDK family. As to quaternary structure, homotetramer. Mg(2+) serves as cofactor.

It localises to the cytoplasm. It catalyses the reaction a 2'-deoxyribonucleoside 5'-diphosphate + ATP = a 2'-deoxyribonucleoside 5'-triphosphate + ADP. The catalysed reaction is a ribonucleoside 5'-diphosphate + ATP = a ribonucleoside 5'-triphosphate + ADP. Functionally, major role in the synthesis of nucleoside triphosphates other than ATP. The ATP gamma phosphate is transferred to the NDP beta phosphate via a ping-pong mechanism, using a phosphorylated active-site intermediate. The polypeptide is Nucleoside diphosphate kinase (Coxiella burnetii (strain CbuK_Q154) (Coxiella burnetii (strain Q154))).